The primary structure comprises 51 residues: Mitochondrial import receptor subunit TOM5 homolog (51 aa).

Met-1 is modified (N-acetylmethionine). Lys-10 participates in a covalent cross-link: Glycyl lysine isopeptide (Lys-Gly) (interchain with G-Cter in SUMO2). Residues 27 to 45 (SIRNFLIYVALLRVTPYIL) form a helical membrane-spanning segment.

Belongs to the Tom5 family. Forms part of the preprotein translocase complex of the outer mitochondrial membrane (TOM complex) which consists of at least 7 different proteins (TOMM5, TOMM6, TOMM7, TOMM20, TOMM22, TOMM40 and TOMM70).

The protein localises to the mitochondrion outer membrane. The protein is Mitochondrial import receptor subunit TOM5 homolog of Mus musculus (Mouse).